A 94-amino-acid chain; its full sequence is Large ribosomal subunit protein eL33 (94 aa).

The protein belongs to the eukaryotic ribosomal protein eL33 family.

In Aeropyrum pernix (strain ATCC 700893 / DSM 11879 / JCM 9820 / NBRC 100138 / K1), this protein is Large ribosomal subunit protein eL33.